The following is a 503-amino-acid chain: Sodium/hydrogen exchanger 3 (503 aa).

Over 1-22 (MVIGLSTMLEKTEALFASDHAS) the chain is Cytoplasmic. A helical membrane pass occupies residues 23 to 43 (VVSMNLFVALLCACIVLGHLL). The Vacuolar portion of the chain corresponds to 44 to 51 (EETRWMNE). An N-linked (GlcNAc...) asparagine glycan is attached at asparagine 50. The chain crosses the membrane as a helical span at residues 52–72 (SITALIIGSCTGIVILLISGG). The Cytoplasmic portion of the chain corresponds to 73–76 (KSSR). Positions 77–97 (ILVFSEDLFFIYLLPPIIFNA) form an intramembrane region, helical. Topologically, residues 98–109 (GFQVKKKQFFRN) are cytoplasmic. Residues 110-130 (FMTIMLFGAIGTLISFVIISF) traverse the membrane as a helical segment. At 131–138 (GAKHLFEK) the chain is on the vacuolar side. The chain crosses the membrane as a helical span at residues 139–159 (MNIGDLTIADYLAIGAIFSAT). The Cytoplasmic segment spans residues 160 to 174 (DSVCTLQVLNQDETP). A helical membrane pass occupies residues 175–195 (LLYSLVFGEGVVNDATSVVLF). The Vacuolar portion of the chain corresponds to 196–219 (NAIQRFDLTNINSAIALEFAGNFF). A helical membrane pass occupies residues 220 to 240 (YLFILSTALGVAAGLLSAFVI). Residues 241–265 (KKLYIGRHSTDREVALMMLLAYLSY) lie on the Cytoplasmic side of the membrane. Residues 266–286 (MLAELFHLSSILTVFFCGIVM) traverse the membrane as a helical segment. The Vacuolar portion of the chain corresponds to 287 to 305 (SHYTWHNVTDKSKVTTKHT). The N-linked (GlcNAc...) asparagine glycan is linked to asparagine 293. Residues 306-326 (FAAMSFLAEIFIFLYVGMDAL) traverse the membrane as a helical segment. At 327–345 (DIEKWDVVRNSPGQSIGVS) the chain is on the cytoplasmic side. The helical transmembrane segment at 346–366 (SILLGLILLGRAAFVFPLSFL) threads the bilayer. At 367-383 (SNLTKSSPDEKIDLKKQ) the chain is on the vacuolar side. A glycan (N-linked (GlcNAc...) asparagine) is linked at asparagine 368. Residues 384–406 (VTIWWAGLMRGAVSMALAYNQFT) form a helical membrane-spanning segment. Residues 407–416 (TSGHTKVLGN) are Cytoplasmic-facing. Residues 417–437 (AIMITSTITVVLFSTVVFGLL) traverse the membrane as a helical segment. At 438-503 (TKPLVKHLQP…FWKSPSRFTH (66 aa)) the chain is on the vacuolar side.

Belongs to the monovalent cation:proton antiporter 1 (CPA1) transporter (TC 2.A.36) family. In terms of tissue distribution, expressed in roots.

It is found in the vacuole membrane. It carries out the reaction Na(+)(in) + H(+)(out) = Na(+)(out) + H(+)(in). The catalysed reaction is K(+)(in) + H(+)(out) = K(+)(out) + H(+)(in). Its function is as follows. May act in low affinity electroneutral exchange of protons for cations such as Na(+) or K(+) across membranes. May also exchange Li(+) and Cs(+) with a lower affinity. This Arabidopsis thaliana (Mouse-ear cress) protein is Sodium/hydrogen exchanger 3 (NHX3).